The chain runs to 152 residues: Aspartate carbamoyltransferase regulatory chain (152 aa).

Zn(2+) contacts are provided by Cys109, Cys114, Cys138, and Cys141.

The protein belongs to the PyrI family. Contains catalytic and regulatory chains. Requires Zn(2+) as cofactor.

Its function is as follows. Involved in allosteric regulation of aspartate carbamoyltransferase. This is Aspartate carbamoyltransferase regulatory chain from Proteus mirabilis (strain HI4320).